Consider the following 450-residue polypeptide: Phosphoglucosamine mutase (450 aa).

Serine 102 (phosphoserine intermediate) is an active-site residue. Positions 102, 243, 245, and 247 each coordinate Mg(2+). Serine 102 carries the post-translational modification Phosphoserine.

This sequence belongs to the phosphohexose mutase family. The cofactor is Mg(2+). Activated by phosphorylation.

It carries out the reaction alpha-D-glucosamine 1-phosphate = D-glucosamine 6-phosphate. Functionally, catalyzes the conversion of glucosamine-6-phosphate to glucosamine-1-phosphate. This Rhizobium rhizogenes (strain K84 / ATCC BAA-868) (Agrobacterium radiobacter) protein is Phosphoglucosamine mutase.